The following is a 589-amino-acid chain: NADPH-dependent diflavin oxidoreductase 1 (589 aa).

The 147-residue stretch at 5-151 folds into the Flavodoxin-like domain; it reads ITILYGSETG…YYIEWEAELI (147 aa). FMN is bound by residues 11–16, 60–63, 98–107, and Glu-133; these read SETGNA, STTG, and VGDSSYVKYN. The 238-residue stretch at 202-439 folds into the FAD-binding FR-type domain; that stretch reads DGLKLGTVLE…SIQRSSFKYK (238 aa). Residues Arg-349, 380–383, and 412–415 each bind FAD; these read RMFS and GVCT. Residues Thr-452 and 507–508 each bind NADP(+); that span reads SR. Trp-589 is an FAD binding site.

It belongs to the NADPH-dependent diflavin oxidoreductase NDOR1 family. This sequence in the N-terminal section; belongs to the flavodoxin family. In the C-terminal section; belongs to the flavoprotein pyridine nucleotide cytochrome reductase family. In terms of assembly, interacts with DRE2; as part of the cytosolic iron-sulfur (Fe-S) protein assembly (CIA) machinery. FAD serves as cofactor. Requires FMN as cofactor.

The protein resides in the cytoplasm. Its subcellular location is the mitochondrion. The catalysed reaction is 2 oxidized [2Fe-2S]-[protein] + NADPH = 2 reduced [2Fe-2S]-[protein] + NADP(+) + H(+). NADPH-dependent reductase which is a central component of the cytosolic iron-sulfur (Fe-S) protein assembly (CIA) machinery. Transfers electrons from NADPH via its FAD and FMN prosthetic groups to the [2Fe-2S] cluster of DRE2, another key component of the CIA machinery. In turn, this reduced cluster provides electrons for assembly of cytosolic iron-sulfur cluster proteins. Positively controls H(2)O(2)-induced cell death. The sequence is that of NADPH-dependent diflavin oxidoreductase 1 from Candida albicans (strain SC5314 / ATCC MYA-2876) (Yeast).